Consider the following 213-residue polypeptide: Penicillin-binding protein activator LpoB (213 aa).

The first 19 residues, 1–19 (MTKMSRYALITALAMFLAG), serve as a signal peptide directing secretion. Cys-20 is lipidated: N-palmitoyl cysteine. Cys-20 carries S-diacylglycerol cysteine lipidation. A disordered region spans residues 28–74 (PVEEVKPAPEQPAEPQQPVPTVPSVPTIPQQPGPIEHEDQTAPPAPH). A compositionally biased stretch (pro residues) spans 36–50 (PEQPAEPQQPVPTVP).

Belongs to the LpoB family. Interacts with PBP1b.

It localises to the cell outer membrane. Regulator of peptidoglycan synthesis that is essential for the function of penicillin-binding protein 1B (PBP1b). The polypeptide is Penicillin-binding protein activator LpoB (Escherichia coli O157:H7).